The following is a 372-amino-acid chain: Queuine tRNA-ribosyltransferase (372 aa).

Asp89 (proton acceptor) is an active-site residue. Substrate is bound by residues 89-93 (DSGGF), Asp143, Gln185, and Gly212. Residues 243–249 (GVGKPED) form an RNA binding region. The active-site Nucleophile is Asp262. The tract at residues 267–271 (TRNAR) is RNA binding; important for wobble base 34 recognition. Zn(2+) contacts are provided by Cys300, Cys302, Cys305, and His331.

It belongs to the queuine tRNA-ribosyltransferase family. In terms of assembly, homodimer. Within each dimer, one monomer is responsible for RNA recognition and catalysis, while the other monomer binds to the replacement base PreQ1. The cofactor is Zn(2+).

It catalyses the reaction 7-aminomethyl-7-carbaguanine + guanosine(34) in tRNA = 7-aminomethyl-7-carbaguanosine(34) in tRNA + guanine. Its pathway is tRNA modification; tRNA-queuosine biosynthesis. Catalyzes the base-exchange of a guanine (G) residue with the queuine precursor 7-aminomethyl-7-deazaguanine (PreQ1) at position 34 (anticodon wobble position) in tRNAs with GU(N) anticodons (tRNA-Asp, -Asn, -His and -Tyr). Catalysis occurs through a double-displacement mechanism. The nucleophile active site attacks the C1' of nucleotide 34 to detach the guanine base from the RNA, forming a covalent enzyme-RNA intermediate. The proton acceptor active site deprotonates the incoming PreQ1, allowing a nucleophilic attack on the C1' of the ribose to form the product. After dissociation, two additional enzymatic reactions on the tRNA convert PreQ1 to queuine (Q), resulting in the hypermodified nucleoside queuosine (7-(((4,5-cis-dihydroxy-2-cyclopenten-1-yl)amino)methyl)-7-deazaguanosine). This Chromohalobacter salexigens (strain ATCC BAA-138 / DSM 3043 / CIP 106854 / NCIMB 13768 / 1H11) protein is Queuine tRNA-ribosyltransferase.